The sequence spans 149 residues: Putative pre-16S rRNA nuclease (149 aa).

This sequence belongs to the YqgF nuclease family.

The protein resides in the cytoplasm. In terms of biological role, could be a nuclease involved in processing of the 5'-end of pre-16S rRNA. The chain is Putative pre-16S rRNA nuclease from Heliobacterium modesticaldum (strain ATCC 51547 / Ice1).